A 232-amino-acid chain; its full sequence is 6-phosphogluconolactonase (232 aa).

Belongs to the glucosamine/galactosamine-6-phosphate isomerase family. 6-phosphogluconolactonase subfamily.

The catalysed reaction is 6-phospho-D-glucono-1,5-lactone + H2O = 6-phospho-D-gluconate + H(+). It participates in carbohydrate degradation; pentose phosphate pathway; D-ribulose 5-phosphate from D-glucose 6-phosphate (oxidative stage): step 2/3. In terms of biological role, hydrolysis of 6-phosphogluconolactone to 6-phosphogluconate. This is 6-phosphogluconolactonase (pgl) from Caulobacter vibrioides (strain ATCC 19089 / CIP 103742 / CB 15) (Caulobacter crescentus).